Consider the following 40-residue polypeptide: Photosystem II reaction center protein J (40 aa).

The chain crosses the membrane as a helical span at residues 8–28; sequence IPLWIIGTVAGIVVIGLIGLF.

It belongs to the PsbJ family. PSII is composed of 1 copy each of membrane proteins PsbA, PsbB, PsbC, PsbD, PsbE, PsbF, PsbH, PsbI, PsbJ, PsbK, PsbL, PsbM, PsbT, PsbX, PsbY, PsbZ, Psb30/Ycf12, at least 3 peripheral proteins of the oxygen-evolving complex and a large number of cofactors. It forms dimeric complexes.

It is found in the plastid. The protein localises to the chloroplast thylakoid membrane. In terms of biological role, one of the components of the core complex of photosystem II (PSII). PSII is a light-driven water:plastoquinone oxidoreductase that uses light energy to abstract electrons from H(2)O, generating O(2) and a proton gradient subsequently used for ATP formation. It consists of a core antenna complex that captures photons, and an electron transfer chain that converts photonic excitation into a charge separation. The protein is Photosystem II reaction center protein J of Pisum sativum (Garden pea).